The primary structure comprises 92 residues: Small ribosomal subunit protein uS19 (92 aa).

This sequence belongs to the universal ribosomal protein uS19 family.

Functionally, protein S19 forms a complex with S13 that binds strongly to the 16S ribosomal RNA. This Variovorax paradoxus (strain S110) protein is Small ribosomal subunit protein uS19.